We begin with the raw amino-acid sequence, 446 residues long: NADH-dependent phenylglyoxylate dehydrogenase subunit beta (446 aa).

4 consecutive 4Fe-4S ferredoxin-type domains span residues 6-35 (STIA…TDDI), 49-80 (ADKT…KDGT), 82-111 (GVIG…LDEA), and 109-141 (DEAT…HITT).

Dimer of heteropentamers composed of an alpha (PadG), a beta (PadI), a gamma (PadE), a delta (PadF) and an epsilon (PadH) subunit. [4Fe-4S] cluster serves as cofactor.

The enzyme catalyses phenylglyoxylate + NAD(+) + CoA = benzoyl-CoA + CO2 + NADH. With respect to regulation, activated by magnesium ions and thiamine diphosphate. Functionally, involved in the anaerobic metabolism of phenylalanine and phenylacetate. Catalyzes the oxidative decarboxylation of phenylglyoxylate to benzoyl-CoA and CO(2). It can also react slowly with 2-oxo-3-methylbutanoate and use different electron acceptors such as benzyl viologen, methyl viologen, FAD or FMN, but NAD seems to be the physiological electron acceptor. Also catalyzes an isotope exchange between CO(2) and the carboxyl group which proves partial or complete reversibility of the oxidative decarboxylation reaction. This chain is NADH-dependent phenylglyoxylate dehydrogenase subunit beta (padI), found in Aromatoleum evansii (Azoarcus evansii).